A 224-amino-acid chain; its full sequence is dTDP-fucosamine acetyltransferase (224 aa).

An N-acetyltransferase domain is found at 94–224 (PALRQLASAA…VESTAYWLYR (131 aa)). Acetyl-CoA-binding positions include 168 to 174 (LAGRGAG), asparagine 201, and arginine 207. The Proton donor role is filled by tyrosine 208.

This sequence belongs to the WecD family. As to quaternary structure, homodimer.

It carries out the reaction dTDP-4-amino-4,6-dideoxy-alpha-D-galactose + acetyl-CoA = dTDP-4-acetamido-4,6-dideoxy-alpha-D-galactose + CoA + H(+). The protein operates within bacterial outer membrane biogenesis; enterobacterial common antigen biosynthesis. Its function is as follows. Catalyzes the acetylation of dTDP-fucosamine (dTDP-4-amino-4,6-dideoxy-D-galactose) to dTDP-Fuc4NAc, which is utilized in the biosynthesis of the enterobacterial common antigen (ECA). The polypeptide is dTDP-fucosamine acetyltransferase (Escherichia coli O6:H1 (strain CFT073 / ATCC 700928 / UPEC)).